A 224-amino-acid polypeptide reads, in one-letter code: Holliday junction branch migration complex subunit RuvA (224 aa).

Residues 1 to 64 form a domain I region; the sequence is MIGKVAGILD…EDLLQLFGFP (64 aa). The interval 65-143 is domain II; the sequence is TMIEKEWHRL…ALMAMGGGTA (79 aa). Positions 141–185 are disordered; the sequence is GTAALAPSEPPEPQPGTSSGSRRKTRAPEPPRPSHTADALSALAN. Positions 144-170 are flexible linker; that stretch reads ALAPSEPPEPQPGTSSGSRRKTRAPEP. The segment at 171–224 is domain III; sequence PRPSHTADALSALANLGYQPTDAAQAVAQAAGESPDADTAALIRAALKLLAPKS.

The protein belongs to the RuvA family. As to quaternary structure, homotetramer. Forms an RuvA(8)-RuvB(12)-Holliday junction (HJ) complex. HJ DNA is sandwiched between 2 RuvA tetramers; dsDNA enters through RuvA and exits via RuvB. An RuvB hexamer assembles on each DNA strand where it exits the tetramer. Each RuvB hexamer is contacted by two RuvA subunits (via domain III) on 2 adjacent RuvB subunits; this complex drives branch migration. In the full resolvosome a probable DNA-RuvA(4)-RuvB(12)-RuvC(2) complex forms which resolves the HJ.

The protein resides in the cytoplasm. The RuvA-RuvB-RuvC complex processes Holliday junction (HJ) DNA during genetic recombination and DNA repair, while the RuvA-RuvB complex plays an important role in the rescue of blocked DNA replication forks via replication fork reversal (RFR). RuvA specifically binds to HJ cruciform DNA, conferring on it an open structure. The RuvB hexamer acts as an ATP-dependent pump, pulling dsDNA into and through the RuvAB complex. HJ branch migration allows RuvC to scan DNA until it finds its consensus sequence, where it cleaves and resolves the cruciform DNA. This chain is Holliday junction branch migration complex subunit RuvA, found in Cereibacter sphaeroides (strain KD131 / KCTC 12085) (Rhodobacter sphaeroides).